The following is a 523-amino-acid chain: 2-isopropylmalate synthase (523 aa).

The Pyruvate carboxyltransferase domain maps to 5-267; sequence VIIFDTTLRD…ETGINAKEIH (263 aa). Asp-14, His-202, His-204, and Asn-238 together coordinate Mn(2+). Residues 392–523 are regulatory domain; sequence KLQQLVVHSD…QQEKQVLGGV (132 aa).

Belongs to the alpha-IPM synthase/homocitrate synthase family. LeuA type 1 subfamily. As to quaternary structure, homodimer. The cofactor is Mn(2+).

The protein resides in the cytoplasm. The catalysed reaction is 3-methyl-2-oxobutanoate + acetyl-CoA + H2O = (2S)-2-isopropylmalate + CoA + H(+). It participates in amino-acid biosynthesis; L-leucine biosynthesis; L-leucine from 3-methyl-2-oxobutanoate: step 1/4. Its function is as follows. Catalyzes the condensation of the acetyl group of acetyl-CoA with 3-methyl-2-oxobutanoate (2-ketoisovalerate) to form 3-carboxy-3-hydroxy-4-methylpentanoate (2-isopropylmalate). The polypeptide is 2-isopropylmalate synthase (Shewanella piezotolerans (strain WP3 / JCM 13877)).